The sequence spans 414 residues: MSKGLVVLAYSGGLDTSCILVWLKEQGYDVIAYLANIGQDEDFDVARKKAEKLGAKKVFIEDLRSEFVQEFIWPALQANALYEDRYLLGTSIARPCIARRQVQIAQREGAQYVSHGATGKGNDQVRFELTCYALYPQVQVIAPWRIPEFYNRFRGRKDLMEYAEKHNIPVPVTPKAPWSMDANLMHISYESGILENPKNHAPSDLYQMTKNPEHSPDQADMLEIEFKKGVPVRVSHLKDGISKETPLEIFCYLNEIGGKHGVGRIDIVENRFIGMKSRGIYETPGGTVLLQAHLDIETFTMDREVRKIKQSLGIKFSELIYNGFWFSPECEFVRECVERSQKHVEGRVQLSVYKGQVYILGRESPKSLYNEELVSMDVQGDYDPCDASGFIKINAVRLREHNRLQGAALSKHNV.

ATP is bound by residues 9 to 17 (AYSGGLDTS) and Ala35. L-citrulline contacts are provided by Tyr86 and Ser91. 114-122 (SHGATGKGN) is an ATP binding site. The L-aspartate site is built by Thr118, Asn122, and Asp123. Asn122 is an L-citrulline binding site. The L-citrulline site is built by Arg126, Ser179, Ser188, Glu269, and Tyr281.

This sequence belongs to the argininosuccinate synthase family. As to quaternary structure, homotetramer.

The protein localises to the cytoplasm. It localises to the cytosol. The catalysed reaction is L-citrulline + L-aspartate + ATP = 2-(N(omega)-L-arginino)succinate + AMP + diphosphate + H(+). It participates in amino-acid biosynthesis; L-arginine biosynthesis; L-arginine from L-ornithine and carbamoyl phosphate: step 2/3. Its pathway is nitrogen metabolism; urea cycle; (N(omega)-L-arginino)succinate from L-aspartate and L-citrulline: step 1/1. One of the enzymes of the urea cycle, the metabolic pathway transforming neurotoxic amonia produced by protein catabolism into inocuous urea in the liver of ureotelic animals. Catalyzes the formation of arginosuccinate from aspartate, citrulline and ATP and together with ASL it is responsible for the biosynthesis of arginine in most body tissues. The sequence is that of Argininosuccinate synthase from Danio rerio (Zebrafish).